A 101-amino-acid polypeptide reads, in one-letter code: MAKLSSINKNERRKKLVKAYAGKYARLKAIADDESKDETERLIARLKLAEIPRNANPTRVRNRCEVTGRPRAYYRKFRLCRVQLRDLANKGLIPGVTKSSW.

This sequence belongs to the universal ribosomal protein uS14 family. In terms of assembly, part of the 30S ribosomal subunit. Contacts proteins S3 and S10.

In terms of biological role, binds 16S rRNA, required for the assembly of 30S particles and may also be responsible for determining the conformation of the 16S rRNA at the A site. The chain is Small ribosomal subunit protein uS14 from Rhizorhabdus wittichii (strain DSM 6014 / CCUG 31198 / JCM 15750 / NBRC 105917 / EY 4224 / RW1) (Sphingomonas wittichii).